Reading from the N-terminus, the 396-residue chain is Phosphoglycerate kinase (396 aa).

Substrate is bound by residues 21 to 23 (DFN), Arg-36, 59 to 62 (HLGK), Arg-119, and Arg-156. ATP-binding positions include Lys-206, Glu-325, and 352–355 (GGDS).

The protein belongs to the phosphoglycerate kinase family. As to quaternary structure, monomer.

The protein resides in the cytoplasm. It carries out the reaction (2R)-3-phosphoglycerate + ATP = (2R)-3-phospho-glyceroyl phosphate + ADP. It functions in the pathway carbohydrate degradation; glycolysis; pyruvate from D-glyceraldehyde 3-phosphate: step 2/5. This chain is Phosphoglycerate kinase, found in Staphylococcus carnosus (strain TM300).